The sequence spans 269 residues: uncharacterized protein (269 aa).

The stretch at 3–66 (VDQAAIDEIL…QNLQNLAEGA (64 aa)) forms a coiled coil. Positions 83 to 142 (AQIPEPPKPEPEVEQPETETGPEPEPEAEPELKEVKEDEPPEEDVVRELDESKSAEPIPE) are disordered. The segment covering 94-111 (EVEQPETETGPEPEPEAE) has biased composition (acidic residues). The span at 112-136 (PELKEVKEDEPPEEDVVRELDESKS) shows a compositional bias: basic and acidic residues.

This is an uncharacterized protein from Archaeoglobus fulgidus (strain ATCC 49558 / DSM 4304 / JCM 9628 / NBRC 100126 / VC-16).